The chain runs to 123 residues: uncharacterized protein (123 aa).

This is an uncharacterized protein from Saccharomyces cerevisiae (strain ATCC 204508 / S288c) (Baker's yeast).